Here is a 503-residue protein sequence, read N- to C-terminus: Glycerol kinase (503 aa).

Threonine 14 lines the ADP pocket. The ATP site is built by threonine 14, threonine 15, and serine 16. Residue threonine 14 participates in sn-glycerol 3-phosphate binding. Arginine 18 lines the ADP pocket. Arginine 84, glutamate 85, tyrosine 136, and aspartate 246 together coordinate sn-glycerol 3-phosphate. The glycerol site is built by arginine 84, glutamate 85, tyrosine 136, aspartate 246, and glutamine 247. Positions 268 and 311 each coordinate ADP. Residues threonine 268, glycine 311, glutamine 315, and glycine 412 each coordinate ATP. The ADP site is built by glycine 412 and asparagine 416.

Belongs to the FGGY kinase family.

The catalysed reaction is glycerol + ATP = sn-glycerol 3-phosphate + ADP + H(+). It participates in polyol metabolism; glycerol degradation via glycerol kinase pathway; sn-glycerol 3-phosphate from glycerol: step 1/1. Its activity is regulated as follows. Inhibited by fructose 1,6-bisphosphate (FBP). Its function is as follows. Key enzyme in the regulation of glycerol uptake and metabolism. Catalyzes the phosphorylation of glycerol to yield sn-glycerol 3-phosphate. This is Glycerol kinase from Haemophilus influenzae (strain 86-028NP).